Here is a 288-residue protein sequence, read N- to C-terminus: Quinate/shikimate dehydrogenase (288 aa).

Lys71 and Asp107 together coordinate substrate. NAD(+) is bound by residues 132 to 135 (AGGA), 155 to 158 (NRRD), Lys205, 232 to 235 (CVYN), and Gly255.

It belongs to the shikimate dehydrogenase family. Homodimer.

It carries out the reaction L-quinate + NAD(+) = 3-dehydroquinate + NADH + H(+). The enzyme catalyses L-quinate + NADP(+) = 3-dehydroquinate + NADPH + H(+). The catalysed reaction is shikimate + NADP(+) = 3-dehydroshikimate + NADPH + H(+). It catalyses the reaction shikimate + NAD(+) = 3-dehydroshikimate + NADH + H(+). It functions in the pathway metabolic intermediate biosynthesis; chorismate biosynthesis; chorismate from D-erythrose 4-phosphate and phosphoenolpyruvate: step 4/7. Its function is as follows. The actual biological function of YdiB remains unclear, nor is it known whether 3-dehydroshikimate or quinate represents the natural substrate. Catalyzes the reversible NAD-dependent reduction of both 3-dehydroshikimate (DHSA) and 3-dehydroquinate to yield shikimate (SA) and quinate, respectively. It can use both NAD or NADP for catalysis, however it has higher catalytic efficiency with NAD. This Escherichia coli (strain SMS-3-5 / SECEC) protein is Quinate/shikimate dehydrogenase.